Reading from the N-terminus, the 211-residue chain is Probable transcriptional regulatory protein SgaR (211 aa).

In terms of domain architecture, Response regulatory spans 10-126 (EVSIVDQNPV…VLLEAVVSVA (117 aa)). A 4-aspartylphosphate modification is found at aspartate 15. Residues 141-206 (NHDPLESLTA…MAVALHVSIN (66 aa)) enclose the HTH luxR-type domain. The segment at residues 165-184 (NLQIAARTGISRNTVKYHLK) is a DNA-binding region (H-T-H motif).

Functionally, not known. Could act on the sgaA gene expression. The sequence is that of Probable transcriptional regulatory protein SgaR (sgaR) from Hyphomicrobium methylovorum.